A 304-amino-acid polypeptide reads, in one-letter code: UDP-N-acetylenolpyruvoylglucosamine reductase (304 aa).

The FAD-binding PCMH-type domain maps to 33-198 (RVGGPVDILL…ITATFCFESG (166 aa)). Arg-177 is a catalytic residue. Residue Ser-227 is the Proton donor of the active site. Glu-297 is a catalytic residue.

It belongs to the MurB family. The cofactor is FAD.

It localises to the cytoplasm. The catalysed reaction is UDP-N-acetyl-alpha-D-muramate + NADP(+) = UDP-N-acetyl-3-O-(1-carboxyvinyl)-alpha-D-glucosamine + NADPH + H(+). It functions in the pathway cell wall biogenesis; peptidoglycan biosynthesis. Functionally, cell wall formation. The chain is UDP-N-acetylenolpyruvoylglucosamine reductase from Clostridium botulinum (strain Alaska E43 / Type E3).